The following is a 111-amino-acid chain: Small ribosomal subunit protein bS16 (111 aa).

A disordered region spans residues 92 to 111 (EKGVKESNEIVEPEGEEVKE). Positions 100–111 (EIVEPEGEEVKE) are enriched in acidic residues.

The protein belongs to the bacterial ribosomal protein bS16 family.

The sequence is that of Small ribosomal subunit protein bS16 from Petrotoga mobilis (strain DSM 10674 / SJ95).